The sequence spans 802 residues: Copal-8-ol diphosphate hydratase, chloroplastic (802 aa).

Residues 1–24 constitute a chloroplast transit peptide; the sequence is MQVIITSSHRFFCHHLHQLKSPTS. Lysine 249 lines the substrate pocket. Mg(2+)-binding residues include aspartate 382 and aspartate 384. The short motif at 382-385 is the DXDD motif element; sequence DVDD. A substrate-binding site is contributed by lysine 468.

It belongs to the terpene synthase family. The cofactor is Mg(2+). As to expression, expressed specifically in the secretory cells of the glandular trichomes.

Its subcellular location is the plastid. The protein localises to the chloroplast. It catalyses the reaction (2E,6E,10E)-geranylgeranyl diphosphate + H2O = 8-hydroxycopalyl diphosphate. Its pathway is secondary metabolite biosynthesis; terpenoid biosynthesis. In terms of biological role, class-II terpene synthase that synthesizes 8-hydroxy-copalyl diphosphate. Involved in the biosynthesis of cis-abienol, a labdane diterpene that can be used as synthesis precursor of ambergris substitution fragance products. The polypeptide is Copal-8-ol diphosphate hydratase, chloroplastic (Nicotiana tabacum (Common tobacco)).